Here is a 127-residue protein sequence, read N- to C-terminus: ATP synthase epsilon chain (127 aa).

It belongs to the ATPase epsilon chain family. As to quaternary structure, F-type ATPases have 2 components, CF(1) - the catalytic core - and CF(0) - the membrane proton channel. CF(1) has five subunits: alpha(3), beta(3), gamma(1), delta(1), epsilon(1). CF(0) has three main subunits: a, b and c.

The protein resides in the cell inner membrane. In terms of biological role, produces ATP from ADP in the presence of a proton gradient across the membrane. In Leptospira borgpetersenii serovar Hardjo-bovis (strain JB197), this protein is ATP synthase epsilon chain.